The chain runs to 162 residues: Small ribosomal subunit protein uS19 (162 aa).

Positions 1–27 (MAKQKKFSGKGSARSKRKQNRKQVGPR) are enriched in basic residues. A disordered region spans residues 1 to 29 (MAKQKKFSGKGSARSKRKQNRKQVGPRRR).

The protein belongs to the universal ribosomal protein uS19 family.

In terms of biological role, protein S19 forms a complex with S13 that binds strongly to the 16S ribosomal RNA. The chain is Small ribosomal subunit protein uS19 from Methanococcus aeolicus (strain ATCC BAA-1280 / DSM 17508 / OCM 812 / Nankai-3).